The chain runs to 441 residues: Amino-acid acetyltransferase (441 aa).

An N-acetyltransferase domain is found at 295–434 (EQVRRATIND…QALYNYQRRS (140 aa)).

The protein belongs to the acetyltransferase family. ArgA subfamily. In terms of assembly, homohexamer.

It is found in the cytoplasm. The enzyme catalyses L-glutamate + acetyl-CoA = N-acetyl-L-glutamate + CoA + H(+). It participates in amino-acid biosynthesis; L-arginine biosynthesis; N(2)-acetyl-L-ornithine from L-glutamate: step 1/4. The sequence is that of Amino-acid acetyltransferase from Serratia proteamaculans (strain 568).